We begin with the raw amino-acid sequence, 255 residues long: 2-(S)-hydroxypropyl-CoM dehydrogenase 3 (255 aa).

Residues isoleucine 19, aspartate 38, 64 to 65, and asparagine 91 each bind NAD(+); that span reads DV. Serine 143 and tyrosine 156 together coordinate (S)-2-hydroxypropyl-coenzyme M. Tyrosine 156 acts as the Proton acceptor in catalysis. Lysine 160 is a binding site for NAD(+). (S)-2-hydroxypropyl-coenzyme M is bound at residue threonine 188. 189–193 is a binding site for NAD(+); the sequence is VTSTG. Tyrosine 215 contacts (S)-2-hydroxypropyl-coenzyme M.

Belongs to the short-chain dehydrogenases/reductases (SDR) family. Homotetramer.

The enzyme catalyses (S)-2-hydroxypropyl-coenzyme M + NAD(+) = 2-oxopropyl-coenzyme M + NADH + H(+). Its activity is regulated as follows. Not inhibited by 2-(2-methyl-2-hydroxypropylthio)ethanesulfonate (M-HPC), an achiral analog of both R-HPC and S-HPC. Its function is as follows. Involved in aliphatic epoxide carboxylation. Catalyzes the reversible oxidation of (2S)-2-hydroxypropyl-coenzyme M (S-HPC) to 2-oxopropyl-coenzyme M (2-KPC). The enzyme is highly specific for the S enantiomers. In vitro can also use the aliphatic ketone 2-butanone and the aliphatic alcohol 2-propanol, and shows an inherent stereoselectivity for 2-butanone reduction. The polypeptide is 2-(S)-hydroxypropyl-CoM dehydrogenase 3 (Xanthobacter autotrophicus (strain ATCC BAA-1158 / Py2)).